The following is a 240-amino-acid chain: Tetrahydromethanopterin S-methyltransferase subunit A (240 aa).

At 1–218 (MVDKKEPASG…KFHSGVHAGK (218 aa)) the chain is on the cytoplasmic side. H85 is a 5-hydroxybenzimidazolylcob(I)amide binding site. Residues 219–239 (IEGAMIGLTVTISLLGLLLLG) traverse the membrane as a helical segment. Residue R240 is a topological domain, extracellular.

It belongs to the MtrA family. The complex is composed of 8 subunits; MtrA, MtrB, MtrC, MtrD, MtrE, MtrF, MtrG and MtrH. The cofactor is 5-hydroxybenzimidazolylcob(I)amide.

Its subcellular location is the cell membrane. It catalyses the reaction 5-methyl-5,6,7,8-tetrahydromethanopterin + coenzyme M + 2 Na(+)(in) = 5,6,7,8-tetrahydromethanopterin + methyl-coenzyme M + 2 Na(+)(out). It functions in the pathway one-carbon metabolism; methanogenesis from CO(2); methyl-coenzyme M from 5,10-methylene-5,6,7,8-tetrahydromethanopterin: step 2/2. Functionally, part of a complex that catalyzes the formation of methyl-coenzyme M and tetrahydromethanopterin from coenzyme M and methyl-tetrahydromethanopterin. This is an energy-conserving, sodium-ion translocating step. The protein is Tetrahydromethanopterin S-methyltransferase subunit A of Methanosarcina acetivorans (strain ATCC 35395 / DSM 2834 / JCM 12185 / C2A).